The primary structure comprises 283 residues: Pantothenate synthetase (283 aa).

Position 30 to 37 (30 to 37 (MGNLHLGH)) interacts with ATP. Catalysis depends on His-37, which acts as the Proton donor. Residue Gln-61 participates in (R)-pantoate binding. Gln-61 is a beta-alanine binding site. 149 to 152 (GQKD) lines the ATP pocket. Gln-155 serves as a coordination point for (R)-pantoate. ATP contacts are provided by residues Ile-178 and 186-189 (MSSR).

Belongs to the pantothenate synthetase family. In terms of assembly, homodimer.

The protein resides in the cytoplasm. It catalyses the reaction (R)-pantoate + beta-alanine + ATP = (R)-pantothenate + AMP + diphosphate + H(+). Its pathway is cofactor biosynthesis; (R)-pantothenate biosynthesis; (R)-pantothenate from (R)-pantoate and beta-alanine: step 1/1. In terms of biological role, catalyzes the condensation of pantoate with beta-alanine in an ATP-dependent reaction via a pantoyl-adenylate intermediate. The polypeptide is Pantothenate synthetase (Shewanella pealeana (strain ATCC 700345 / ANG-SQ1)).